Here is a 291-residue protein sequence, read N- to C-terminus: 4-hydroxy-tetrahydrodipicolinate synthase (291 aa).

Thr-44 serves as a coordination point for pyruvate. The active-site Proton donor/acceptor is the Tyr-132. The Schiff-base intermediate with substrate role is filled by Lys-160. A pyruvate-binding site is contributed by Ile-202.

The protein belongs to the DapA family. As to quaternary structure, homotetramer; dimer of dimers.

The protein resides in the cytoplasm. The catalysed reaction is L-aspartate 4-semialdehyde + pyruvate = (2S,4S)-4-hydroxy-2,3,4,5-tetrahydrodipicolinate + H2O + H(+). It functions in the pathway amino-acid biosynthesis; L-lysine biosynthesis via DAP pathway; (S)-tetrahydrodipicolinate from L-aspartate: step 3/4. In terms of biological role, catalyzes the condensation of (S)-aspartate-beta-semialdehyde [(S)-ASA] and pyruvate to 4-hydroxy-tetrahydrodipicolinate (HTPA). The protein is 4-hydroxy-tetrahydrodipicolinate synthase of Zymomonas mobilis subsp. mobilis (strain ATCC 31821 / ZM4 / CP4).